Reading from the N-terminus, the 108-residue chain is Glutaredoxin (108 aa).

The Glutaredoxin domain maps to 3–103 (LAKAKEIVSG…PLLTEAGAIA (101 aa)). Cysteines 23 and 26 form a disulfide.

The protein belongs to the glutaredoxin family. CPYC subfamily.

It localises to the cytoplasm. Functionally, has a glutathione-disulfide oxidoreductase activity in the presence of NADPH and glutathione reductase. Reduces low molecular weight disulfides and proteins. The polypeptide is Glutaredoxin (Solanum lycopersicum (Tomato)).